Consider the following 758-residue polypeptide: MNNSTRLISLFSPHPPPLFLLRGLYISRIANLRRFHRRAFPPSSVASTNLCSFRPLVSLPPLIPTFPIGRFYNHQVRVSAADFVPSYHNQQLPEWTELLQSLSKAGYFSDSGSISGLESEFFPGFPDELLRPALACLALARERPELLEMLSRRDVEVLVENGKPFLFKTGPDSLKRMSLYLRSGLQGIGKLMDMEKASTVDLMRLILSYVVDVASSEESKQHNKEIMESSVRSLLSQIAKMSLRPPESNVHDTMQNQYSDRDGQGVRSFQNNVEMKRGDWICSRCSGMNFARNVKCFQCDEARPKRQLTGSEWECPQCDFYNYGRNVACLRCDCKRPRDSSLNSANSDYSSDPELERRLVENEKKAQRWLSKVAQGGSDANSVDTDEDFPEIMPLRKGVNRYVVSTRKPPLERRLANTENRVATDGNSKRSDDNALGSKTTRSLNEILGSSSSLTSRSDDKNVSSRRFESSQGINTDFVPFVPLPSDMFAKKPKEETQIGLIDNIQVDGFSGGNQNVYQEDKSDANHSGKETDRLEKEDHKSEEPARWFKRVTELHNVSDLESAIPQEISPEKMPMRKGENRFVVSRKKDRSLTSPAYKRPEDSDFVPFVPFPPDYFAKEKQPKESIDTLPAPATENVSQVVQQEPREPSINKSDTVAVKIRNGKSLEGSLVKESDLLDMSEEAKAERWFKRVAEIKNISELSEIPDEDFPSIMPMRKGVNRFVVSKRKTPLERRLTSQRHQRNPHITNSDPTGKGDK.

Residues 122–502 form a 3 X approximate repeat region; the sequence is FPGFPDELLR…PKEETQIGLI (381 aa). 2 RanBP2-type zinc fingers span residues 276–305 and 308–338; these read KRGD…ARPK and LTGS…KRPR. Residues 368 to 415 form repeat 1; sequence RWLSKVAQGGSDANSVDTDEDFPEIMPLRKGVNRYVVSTRKPPLERRL. Disordered regions lie at residues 410-470, 512-545, 572-606, 629-654, and 727-758; these read PLER…RFES, GGNQ…SEEP, EKMP…DSDF, TLPA…INKS, and KRKT…KGDK. Basic and acidic residues-rich tracts occupy residues 457-469, 519-545, and 572-581; these read RSDD…RRFE, QEDK…SEEP, and EKMPMRKGEN. Copy 2 of the repeat occupies 547 to 596; that stretch reads RWFKRVTELHNVSDLESAIPQEISPEKMPMRKGENRFVVSRKKDRSLTSP. Repeat unit 3 spans residues 688–736; the sequence is RWFKRVAEIKNISELSEIPDEDFPSIMPMRKGVNRFVVSKRKTPLERRL.

As to quaternary structure, interacts in vitro with the chloroplast-located protein CCD4/NCED4. Homodimer. Interacts with ORRM1. Interacts with PCMP-H51/CRR28 and PCMP-H12/OTP82. Interacts with ORRM6. Weakly expressed in leaves and roots.

The protein localises to the plastid. The protein resides in the chloroplast. Probable component of some protein complex required for chloroplast and palisade cell development. Involved in C-to-U editing of chloroplastic RNA. Controls a large number of chloroplastic editing sites. Binds the editing recognition trans-factors PCMP-H51/CRR28 and PCMP-H12/OTP82. The polypeptide is Zinc finger protein VAR3, chloroplastic (Arabidopsis thaliana (Mouse-ear cress)).